The sequence spans 244 residues: 1-(5-phosphoribosyl)-5-[(5-phosphoribosylamino)methylideneamino] imidazole-4-carboxamide isomerase (244 aa).

The active-site Proton acceptor is the Asp8. Residue Asp130 is the Proton donor of the active site.

Belongs to the HisA/HisF family.

Its subcellular location is the cytoplasm. The catalysed reaction is 1-(5-phospho-beta-D-ribosyl)-5-[(5-phospho-beta-D-ribosylamino)methylideneamino]imidazole-4-carboxamide = 5-[(5-phospho-1-deoxy-D-ribulos-1-ylimino)methylamino]-1-(5-phospho-beta-D-ribosyl)imidazole-4-carboxamide. It functions in the pathway amino-acid biosynthesis; L-histidine biosynthesis; L-histidine from 5-phospho-alpha-D-ribose 1-diphosphate: step 4/9. This is 1-(5-phosphoribosyl)-5-[(5-phosphoribosylamino)methylideneamino] imidazole-4-carboxamide isomerase from Syntrophomonas wolfei subsp. wolfei (strain DSM 2245B / Goettingen).